The chain runs to 565 residues: MELEHESKRPLYIPYAGPILLEFPLLNKGSAFSEEERSTFNLHGLLPEAVETIEEQVERAYRQYLDFKNDNDKHIYLRNIQDTNETLFYRLLESHLTEMMPIIYTPTVGEACEHFSDIYRRARGLFISYPNRANIDDMLQNATKQNVKVIVVTDGERILGLGDQGIGGMGIPIGKLSLYTACGGISPAYTLPVVLDVGTNNPQRLNDPLYMGWRHPRITGDEYNEFVDEFIQAVKRRWPNVLLQFEDFAQKNAMPLLNRYRDELCCFNDDIQGTAAVTLGSLIAASRAAGRQLKDQTVAFLGAGSAGCGIAEQIIAQMKSEGLSDEQARARIFMVDRFGLLTDKLPNLLDFQSKLIQKSETLADWQTETDAISLLEVVKNAKPTILIGVSGQAGLFTEEIIREMHKHCERPTVMPLSNPTSRVEARPEDIINWTDGQALVATGSPFAPVTYKEKVYPIAQCNNSYIFPGIGLGVIASGAKRVTDAMLMVASRALADCSPMAKEGDGPLLPLLADIQQVSRYIAKQVAKEAQVQGVATVTSDSALEEAIERNYWEPEYRIYKRTSF.

Residue Tyr104 is the Proton donor of the active site. Arg157 is an NAD(+) binding site. Residue Lys175 is the Proton acceptor of the active site. Residues Glu246, Asp247, and Asp270 each coordinate a divalent metal cation. 2 residues coordinate NAD(+): Asp270 and Asn418.

It belongs to the malic enzymes family. In terms of assembly, homotetramer. Mg(2+) serves as cofactor. Mn(2+) is required as a cofactor.

The enzyme catalyses (S)-malate + NAD(+) = pyruvate + CO2 + NADH. It catalyses the reaction oxaloacetate + H(+) = pyruvate + CO2. This Proteus mirabilis (strain HI4320) protein is NAD-dependent malic enzyme.